Consider the following 123-residue polypeptide: Undecaprenol kinase (123 aa).

The Cytoplasmic segment spans residues 1-33; the sequence is MDSKDHRNELNRFFKSFVHAGRGIWETARTERN. Residues 34–51 form a helical membrane-spanning segment; the sequence is FQFHAAAACAVLICGFLV. The Extracellular segment spans residues 52–57; the sequence is ELSIIE. Residues 58-74 traverse the membrane as a helical segment; it reads WMIIFLLIGGMFSLELL. Topologically, residues 75-99 are cytoplasmic; sequence NTAIEHTVDLITDKHHPLAKAAKDA. The helical transmembrane segment at 100-120 threads the bilayer; sequence AAGAVCVFAVISCIIGLLIFL. Residues 121–123 lie on the Extracellular side of the membrane; sequence PKL.

It belongs to the bacterial diacylglycerol kinase family.

Its subcellular location is the cell membrane. It carries out the reaction di-trans,octa-cis-undecaprenol + ATP = di-trans,octa-cis-undecaprenyl phosphate + ADP + H(+). Catalyzes the phosphorylation of undecaprenol in vitro, which is probably the physiological substrate. Exhibits no detectable activity against other substrates such as monoacylglycerol, ceramide, or diacylglycerol (DAG). Appears indispensable for the maintenance of spore stability and viability in B.subtilis. This chain is Undecaprenol kinase (dgkA), found in Bacillus subtilis (strain 168).